The primary structure comprises 375 residues: Dihydroorotate dehydrogenase (quinone) (375 aa).

Residues 78-82 and T102 contribute to the FMN site; that span reads AGLDK. A substrate-binding site is contributed by K82. 127–131 serves as a coordination point for substrate; that stretch reads NRMGF. Residues N159 and N192 each contribute to the FMN site. N192 is a binding site for substrate. The active-site Nucleophile is the S195. Position 197 (N197) interacts with substrate. Positions 230 and 258 each coordinate FMN. 259-260 lines the substrate pocket; the sequence is NT. Residues G288, G317, and 338 to 339 each bind FMN; that span reads YT.

This sequence belongs to the dihydroorotate dehydrogenase family. Type 2 subfamily. In terms of assembly, monomer. FMN is required as a cofactor.

The protein resides in the cell membrane. It catalyses the reaction (S)-dihydroorotate + a quinone = orotate + a quinol. Its pathway is pyrimidine metabolism; UMP biosynthesis via de novo pathway; orotate from (S)-dihydroorotate (quinone route): step 1/1. Functionally, catalyzes the conversion of dihydroorotate to orotate with quinone as electron acceptor. The sequence is that of Dihydroorotate dehydrogenase (quinone) from Cyanothece sp. (strain PCC 7425 / ATCC 29141).